The primary structure comprises 234 residues: Glucosamine-6-phosphate deaminase (234 aa).

The active-site Proton acceptor; for enolization step is Asp-63. Asn-129 functions as the For ring-opening step in the catalytic mechanism. His-131 serves as the catalytic Proton acceptor; for ring-opening step. Residue Glu-136 is the For ring-opening step of the active site.

It belongs to the glucosamine/galactosamine-6-phosphate isomerase family. NagB subfamily.

The enzyme catalyses alpha-D-glucosamine 6-phosphate + H2O = beta-D-fructose 6-phosphate + NH4(+). Its pathway is amino-sugar metabolism; N-acetylneuraminate degradation; D-fructose 6-phosphate from N-acetylneuraminate: step 5/5. Functionally, catalyzes the reversible isomerization-deamination of glucosamine 6-phosphate (GlcN6P) to form fructose 6-phosphate (Fru6P) and ammonium ion. In Listeria welshimeri serovar 6b (strain ATCC 35897 / DSM 20650 / CCUG 15529 / CIP 8149 / NCTC 11857 / SLCC 5334 / V8), this protein is Glucosamine-6-phosphate deaminase.